The following is a 63-amino-acid chain: Conotoxin PnMRCL-0111 (63 aa).

Residues 1–22 (MHCLSVFVILLLLTASAPSVDA) form the signal peptide. Positions 23-50 (QPKTEDDVPLSSFHDDLQRTVRTLLDIR) are excised as a propeptide. W62 carries the tryptophan amide modification.

Belongs to the conotoxin T superfamily. Contains 2 disulfide bonds that can be either 'C1-C3, C2-C4' or 'C1-C4, C2-C3', since these disulfide connectivities have been observed for conotoxins with cysteine framework V (for examples, see AC P0DQQ7 and AC P81755). In terms of tissue distribution, expressed by the venom duct.

The protein localises to the secreted. This Conus pennaceus (Feathered cone) protein is Conotoxin PnMRCL-0111.